Consider the following 123-residue polypeptide: 13 kDa major membrane protein (123 aa).

It is found in the cell membrane. The polypeptide is 13 kDa major membrane protein (Francisella tularensis subsp. holarctica (strain LVS)).